A 368-amino-acid polypeptide reads, in one-letter code: GLABROUS1 enhancer-binding protein-like (368 aa).

The disordered stretch occupies residues 1–123 (MAPKKAEEVV…TSDTEHVKKP (123 aa)). A compositionally biased stretch (acidic residues) spans 17 to 31 (SEEEESGSSGEESES). A compositionally biased stretch (basic and acidic residues) spans 35–47 (VPKKVESSQKPES). The span at 84–97 (TSGSAATVPESSTA) shows a compositional bias: polar residues. Residues 100 to 123 (PLKEAAPEAIKKQKTSDTEHVKKP) show a composition bias toward basic and acidic residues.

It belongs to the GeBP family. Mono-, di- and oligomers. Associated with the Mediator complex. Interacts with MED6. Interacts with MED10A, MED28 and MED32. Interacts with DEK3.

The protein localises to the nucleus. Transcription factor that binds promoters containing the CryR2 element, 5'-ACATAWCT-3'. The DNA-binding activity is decreased upon direct physical interaction with the mediator subunits and is modulated by redox conditions. The oxidized protein is the preferential binding form. This Arabidopsis thaliana (Mouse-ear cress) protein is GLABROUS1 enhancer-binding protein-like.